Consider the following 210-residue polypeptide: uncharacterized protein (210 aa).

This is an uncharacterized protein from Acanthamoeba polyphaga (Amoeba).